A 292-amino-acid chain; its full sequence is Ribosomal RNA small subunit methyltransferase A (292 aa).

N29, L31, G56, E77, D102, and N127 together coordinate S-adenosyl-L-methionine.

This sequence belongs to the class I-like SAM-binding methyltransferase superfamily. rRNA adenine N(6)-methyltransferase family. RsmA subfamily.

It localises to the cytoplasm. The catalysed reaction is adenosine(1518)/adenosine(1519) in 16S rRNA + 4 S-adenosyl-L-methionine = N(6)-dimethyladenosine(1518)/N(6)-dimethyladenosine(1519) in 16S rRNA + 4 S-adenosyl-L-homocysteine + 4 H(+). Specifically dimethylates two adjacent adenosines (A1518 and A1519) in the loop of a conserved hairpin near the 3'-end of 16S rRNA in the 30S particle. May play a critical role in biogenesis of 30S subunits. The chain is Ribosomal RNA small subunit methyltransferase A from Bacillus licheniformis (strain ATCC 14580 / DSM 13 / JCM 2505 / CCUG 7422 / NBRC 12200 / NCIMB 9375 / NCTC 10341 / NRRL NRS-1264 / Gibson 46).